The chain runs to 574 residues: Kelch-like protein 18 (574 aa).

A BTB domain is found at 66–105; that stretch reads MFTNDMMECKQDEIVMQGMDPSALEALINFAYNGNLAIDQ. Residues 140-242 form the BACK domain; sequence CLGVRQFAET…RPQFLSDRVQ (103 aa). 6 Kelch repeats span residues 289-336, 337-383, 384-430, 432-477, 479-524, and 525-571; these read LIYA…VVNG, LLYA…VLDG, QIYV…VFEG, IYVS…SLGS, MFVC…ASCG, and RLYA…CIPL.

As to quaternary structure, interacts with AURKA. Interacts (via BTB domain) with CUL3. Interacts (via kelch repeats) with UNC119.

The protein operates within protein modification; protein ubiquitination. Substrate-specific adapter of a BCR (BTB-CUL3-RBX1) E3 ubiquitin-protein ligase complex required for mitotic progression and cytokinesis. The BCR(KLHL18) E3 ubiquitin ligase complex mediates the ubiquitination of AURKA leading to its activation at the centrosome which is required for initiating mitotic entry. Regulates light-and dark-dependent alpha-transducin localization changes in rod photoreceptors through UNC119 ubiquitination and degradation. Preferentially ubiquitinates the unphosphorylated form of UNC119 over the phosphorylated form. In the presence of UNC119, under dark-adapted conditions alpha-transducin mislocalizes from the outer segment to the inner part of rod photoreceptors which leads to decreased photoreceptor damage caused by light. In Homo sapiens (Human), this protein is Kelch-like protein 18 (KLHL18).